Reading from the N-terminus, the 239-residue chain is Adapter protein MecA (239 aa).

The span at 118 to 128 (EQRTKEKEAQG) shows a compositional bias: basic and acidic residues. Residues 118-137 (EQRTKEKEAQGSKRQKSSAR) are disordered.

It belongs to the MecA family. In terms of assembly, homodimer.

Functionally, enables the recognition and targeting of unfolded and aggregated proteins to the ClpC protease or to other proteins involved in proteolysis. The protein is Adapter protein MecA of Staphylococcus aureus (strain JH1).